The following is a 192-amino-acid chain: Ion-translocating oxidoreductase complex subunit A (192 aa).

6 helical membrane-spanning segments follow: residues 5-25 (LLLL…FLGL), 39-59 (IGMS…SYLV), 65-85 (LPFD…AVVV), 102-122 (ALGI…VALL), 134-154 (AIYG…FSAM), and 171-191 (AIAM…TGLV).

Belongs to the NqrDE/RnfAE family. As to quaternary structure, the complex is composed of six subunits: RnfA, RnfB, RnfC, RnfD, RnfE and RnfG.

The protein localises to the cell inner membrane. Functionally, part of a membrane-bound complex that couples electron transfer with translocation of ions across the membrane. This chain is Ion-translocating oxidoreductase complex subunit A, found in Shewanella sp. (strain ANA-3).